The sequence spans 397 residues: Formate-dependent phosphoribosylglycinamide formyltransferase (397 aa).

N(1)-(5-phospho-beta-D-ribosyl)glycinamide-binding positions include 22 to 23 (EL) and Glu82. ATP-binding positions include Arg114, Lys155, 160–165 (SSGKGQ), 195–198 (EGFV), and Glu203. The region spanning 119–312 (CLAAEELSLP…EFALHARAIL (194 aa)) is the ATP-grasp domain. The Mg(2+) site is built by Glu271 and Glu283. Residues Asp290, Lys360, and 367 to 368 (RR) each bind N(1)-(5-phospho-beta-D-ribosyl)glycinamide.

It belongs to the PurK/PurT family. Homodimer.

The enzyme catalyses N(1)-(5-phospho-beta-D-ribosyl)glycinamide + formate + ATP = N(2)-formyl-N(1)-(5-phospho-beta-D-ribosyl)glycinamide + ADP + phosphate + H(+). Its pathway is purine metabolism; IMP biosynthesis via de novo pathway; N(2)-formyl-N(1)-(5-phospho-D-ribosyl)glycinamide from N(1)-(5-phospho-D-ribosyl)glycinamide (formate route): step 1/1. Involved in the de novo purine biosynthesis. Catalyzes the transfer of formate to 5-phospho-ribosyl-glycinamide (GAR), producing 5-phospho-ribosyl-N-formylglycinamide (FGAR). Formate is provided by PurU via hydrolysis of 10-formyl-tetrahydrofolate. This is Formate-dependent phosphoribosylglycinamide formyltransferase from Alcanivorax borkumensis (strain ATCC 700651 / DSM 11573 / NCIMB 13689 / SK2).